We begin with the raw amino-acid sequence, 657 residues long: UvrABC system protein B (657 aa).

One can recognise a Helicase ATP-binding domain in the interval 29–416 (KLAEFQTNEQ…LSHNNVVEQL (388 aa)). 42-49 (GATGTGKT) contacts ATP. Residues 95 to 118 (YFDFYQPEAYLPAKGVYIEKSATV) carry the Beta-hairpin motif. A Helicase C-terminal domain is found at 435–597 (QVEDLVSEII…KTPMTVQKPI (163 aa)). One can recognise a UVR domain in the interval 615-650 (AALIKQLTKEMKQAAANQNYELAIEIRDSIFELEKQ).

The protein belongs to the UvrB family. As to quaternary structure, forms a heterotetramer with UvrA during the search for lesions. Interacts with UvrC in an incision complex.

It localises to the cytoplasm. Its function is as follows. The UvrABC repair system catalyzes the recognition and processing of DNA lesions. A damage recognition complex composed of 2 UvrA and 2 UvrB subunits scans DNA for abnormalities. Upon binding of the UvrA(2)B(2) complex to a putative damaged site, the DNA wraps around one UvrB monomer. DNA wrap is dependent on ATP binding by UvrB and probably causes local melting of the DNA helix, facilitating insertion of UvrB beta-hairpin between the DNA strands. Then UvrB probes one DNA strand for the presence of a lesion. If a lesion is found the UvrA subunits dissociate and the UvrB-DNA preincision complex is formed. This complex is subsequently bound by UvrC and the second UvrB is released. If no lesion is found, the DNA wraps around the other UvrB subunit that will check the other stand for damage. The protein is UvrABC system protein B of Mycoplasma pneumoniae (strain ATCC 29342 / M129 / Subtype 1) (Mycoplasmoides pneumoniae).